The chain runs to 123 residues: Large ribosomal subunit protein uL29y (123 aa).

It belongs to the universal ribosomal protein uL29 family.

This is Large ribosomal subunit protein uL29y (RPL35B) from Arabidopsis thaliana (Mouse-ear cress).